The chain runs to 286 residues: Probable ketoamine kinase YniA (286 aa).

91–93 contributes to the ATP binding site; the sequence is DYL. Residue Asp-193 is the Proton acceptor of the active site.

Belongs to the fructosamine kinase family.

Ketoamine kinase that phosphorylates ketoamines on the third carbon of the sugar moiety to generate ketoamine 3-phosphate. Its precise substrate are unknown: does not have ribulosamine and/or erythrulosamine 3-kinase activity in vitro. The sequence is that of Probable ketoamine kinase YniA (yniA) from Escherichia coli (strain K12).